The chain runs to 873 residues: Alanine--tRNA ligase (873 aa).

Zn(2+)-binding residues include His-562, His-566, Cys-663, and His-667.

It belongs to the class-II aminoacyl-tRNA synthetase family. The cofactor is Zn(2+).

The protein resides in the cytoplasm. It catalyses the reaction tRNA(Ala) + L-alanine + ATP = L-alanyl-tRNA(Ala) + AMP + diphosphate. Catalyzes the attachment of alanine to tRNA(Ala) in a two-step reaction: alanine is first activated by ATP to form Ala-AMP and then transferred to the acceptor end of tRNA(Ala). Also edits incorrectly charged Ser-tRNA(Ala) and Gly-tRNA(Ala) via its editing domain. This chain is Alanine--tRNA ligase, found in Bordetella avium (strain 197N).